Here is a 1282-residue protein sequence, read N- to C-terminus: Protein crumbs homolog 2 (1282 aa).

Positions 1–35 are cleaved as a signal peptide; it reads MALVGPRIWGPRRDIYPLLLLLLLLLLLLLPWVPA. The Extracellular segment spans residues 36–1221; sequence GLVPPETPSV…PLPLPFPLLE (1186 aa). Residues 71–110 form the EGF-like 1 domain; the sequence is ELGGCATQPCHHGALCVPQGPDPNSFRCYCVPGFQGPHCE. 27 disulfides stabilise this stretch: Cys-75/Cys-86, Cys-80/Cys-98, Cys-100/Cys-109, Cys-116/Cys-127, Cys-121/Cys-136, Cys-138/Cys-147, Cys-154/Cys-165, Cys-159/Cys-174, Cys-176/Cys-185, Cys-192/Cys-203, Cys-197/Cys-212, Cys-214/Cys-224, Cys-231/Cys-242, Cys-236/Cys-251, Cys-253/Cys-262, Cys-269/Cys-280, Cys-274/Cys-310, Cys-312/Cys-321, Cys-328/Cys-339, Cys-333/Cys-348, Cys-350/Cys-359, Cys-366/Cys-377, Cys-371/Cys-386, Cys-388/Cys-397, Cys-404/Cys-415, Cys-409/Cys-428, and Cys-430/Cys-439. Residues 112–148 enclose the EGF-like 2; calcium-binding domain; that stretch reads DIDECASRPCQHGGTCQNLADHYECHCPLGYAGVTCE. An EGF-like 3; calcium-binding domain is found at 150–186; it reads EVDECSSAPCLHGGSCLDGVGSYRCVCAPGYAGANCQ. Residues 188–225 enclose the EGF-like 4; calcium-binding domain; that stretch reads DVDECQSQPCAHGGVCHDLVNGFRCDCADTGYEGARCE. EGF-like domains are found at residues 227-263 and 265-322; these read EVLE…ERCE and DEDE…NDCS. Asn-239 is a glycosylation site (N-linked (GlcNAc...) asparagine). O-linked (Glc...) serine glycosylation is present at Ser-271. The 37-residue stretch at 324 to 360 folds into the EGF-like 7; calcium-binding domain; sequence DVDECASGPCLNGGSCQDLPNGFQCYCQDGYTGLTCQ. In terms of domain architecture, EGF-like 8; calcium-binding spans 362–398; it reads DMDECQSEPCLHGGTCSDTVAGYICQCPEAWGGHDCS. An EGF-like 9 domain is found at 400–440; the sequence is QLTGCQGHTCPLAATCIPTFKSGLHGYFCRCPPGTYGPFCG. N-linked (GlcNAc...) asparagine glycosylation is present at Asn-442. Residues 444–607 form the Laminin G-like 1 domain; it reads TFSVVSGSSV…ELKGTVLLGC (164 aa). 4 cysteine pairs are disulfide-bonded: Cys-583–Cys-607, Cys-613–Cys-624, Cys-618–Cys-633, and Cys-635–Cys-644. One can recognise an EGF-like 10 domain in the interval 609 to 645; sequence RREPCQPLPCAHGGACVDLWTHFRCDCPRPYRGATCT. A Laminin G-like 2 domain is found at 649-808; the sequence is PAATFGLGGA…GQSSNLTQGC (160 aa). N-linked (GlcNAc...) asparagine glycosylation is found at Asn-672, Asn-693, Asn-789, and Asn-803. 4 cysteine pairs are disulfide-bonded: Cys-769–Cys-808, Cys-814–Cys-825, Cys-819–Cys-834, and Cys-836–Cys-845. The EGF-like 11 domain maps to 810 to 846; the sequence is SEDTCNPNPCFNGGTCHVTWNDFYCTCSENFTGPTCA. 4 N-linked (GlcNAc...) asparagine glycosylation sites follow: Asn-839, Asn-889, Asn-929, and Asn-1006. Residues 872–1051 form the Laminin G-like 3 domain; sequence VAEATFREGP…PGSPAVSLGC (180 aa). 13 cysteine pairs are disulfide-bonded: Cys-1010–Cys-1051, Cys-1057–Cys-1068, Cys-1062–Cys-1077, Cys-1079–Cys-1088, Cys-1095–Cys-1105, Cys-1100–Cys-1115, Cys-1117–Cys-1126, Cys-1135–Cys-1147, Cys-1141–Cys-1156, Cys-1158–Cys-1167, Cys-1174–Cys-1185, Cys-1179–Cys-1194, and Cys-1196–Cys-1205. 4 consecutive EGF-like domains span residues 1053-1089, 1091-1127, 1131-1168, and 1170-1206; these read GGPV…PRCE, RADP…PRCR, LPQG…LRCQ, and LDKP…QFCE. N-linked (GlcNAc...) asparagine glycans are attached at residues Asn-1138 and Asn-1155. Residues 1222-1242 form a helical membrane-spanning segment; sequence VAVPAACACLLLLLLGLLSGI. The Cytoplasmic portion of the chain corresponds to 1243-1282; the sequence is LAARKRRQSEGTYSPSQQEVAGARLEMDSVLKVPPEERLI. The segment at 1246-1282 is interaction with EPB41L5; sequence RKRRQSEGTYSPSQQEVAGARLEMDSVLKVPPEERLI.

Belongs to the Crumbs protein family. Interacts (via intracellular domain) with EPB41L5. Post-translationally, O-glucosylated by POGLUT1 at Ser-271; consists of an O-glucose trisaccharide, in which the O-glucose is elongated by the addition of two xylose residues. O-glucosylation is required for localization at the plasma membrane. In the adult eye, strongly expressed in the outer nuclear layer, containing the cell bodies of the photoreceptor cells, and in the inner nuclear layer, containing the cell bodies of the horizontal, bipolar, amacrine, and Mueller glial cells. Also expressed in some cells in the ganglion cell layer (or may be displaced amacrine cells rather than ganglion cells).

Its subcellular location is the apical cell membrane. Functionally, apical polarity protein that plays a central role during the epithelial-to-mesenchymal transition (EMT) at gastrulation, when newly specified mesodermal cells move inside the embryo. Acts by promoting cell ingression, the process by which cells leave the epithelial epiblast and move inside the embryo to form a new tissue layer. The anisotropic distribution of CRB2 and MYH10/myosin-IIB at cell edges define which cells will ingress: cells with high apical CRB2 are probably extruded from the epiblast by neighboring cells with high levels of apical MYH10/myosin-IIB. Also required for maintenance of the apical polarity complex during development of the cortex. The sequence is that of Protein crumbs homolog 2 from Mus musculus (Mouse).